We begin with the raw amino-acid sequence, 552 residues long: CTP synthase (552 aa).

Positions 1-270 are amidoligase domain; sequence MTKFVFVTGG…DGLICDKLRL (270 aa). S13 serves as a coordination point for CTP. S13 is a binding site for UTP. ATP-binding positions include 14–19 and D71; that span reads SLGKGI. The Mg(2+) site is built by D71 and E144. CTP is bound by residues 151-153, 191-196, and K227; these read DIE and KTKPTQ. UTP-binding positions include 191–196 and K227; that span reads KTKPTQ. Positions 295–548 constitute a Glutamine amidotransferase type-1 domain; the sequence is QIAMVGKYVE…IKAAVEHQKP (254 aa). G357 is a binding site for L-glutamine. C384 acts as the Nucleophile; for glutamine hydrolysis in catalysis. L-glutamine-binding positions include 385–388 and E408; that span reads LGMQ. The segment at 432–451 is disordered; it reads KTRSENSDLGGTMRLGAQSS. An L-glutamine-binding site is contributed by R474. Catalysis depends on residues H521 and E523.

The protein belongs to the CTP synthase family. Homotetramer.

The enzyme catalyses UTP + L-glutamine + ATP + H2O = CTP + L-glutamate + ADP + phosphate + 2 H(+). It carries out the reaction L-glutamine + H2O = L-glutamate + NH4(+). It catalyses the reaction UTP + NH4(+) + ATP = CTP + ADP + phosphate + 2 H(+). Its pathway is pyrimidine metabolism; CTP biosynthesis via de novo pathway; CTP from UDP: step 2/2. Allosterically activated by GTP, when glutamine is the substrate; GTP has no effect on the reaction when ammonia is the substrate. The allosteric effector GTP functions by stabilizing the protein conformation that binds the tetrahedral intermediate(s) formed during glutamine hydrolysis. Inhibited by the product CTP, via allosteric rather than competitive inhibition. Catalyzes the ATP-dependent amination of UTP to CTP with either L-glutamine or ammonia as the source of nitrogen. Regulates intracellular CTP levels through interactions with the four ribonucleotide triphosphates. The chain is CTP synthase from Acidovorax sp. (strain JS42).